A 253-amino-acid chain; its full sequence is Ubiquinone biosynthesis O-methyltransferase (253 aa).

S-adenosyl-L-methionine is bound by residues R47, G78, D99, and M141.

The protein belongs to the methyltransferase superfamily. UbiG/COQ3 family.

The catalysed reaction is a 3-demethylubiquinol + S-adenosyl-L-methionine = a ubiquinol + S-adenosyl-L-homocysteine + H(+). The enzyme catalyses a 3-(all-trans-polyprenyl)benzene-1,2-diol + S-adenosyl-L-methionine = a 2-methoxy-6-(all-trans-polyprenyl)phenol + S-adenosyl-L-homocysteine + H(+). It participates in cofactor biosynthesis; ubiquinone biosynthesis. Functionally, O-methyltransferase that catalyzes the 2 O-methylation steps in the ubiquinone biosynthetic pathway. This is Ubiquinone biosynthesis O-methyltransferase from Bradyrhizobium sp. (strain ORS 278).